Consider the following 244-residue polypeptide: PHD finger protein ALFIN-LIKE 2 (244 aa).

Over residues 137–148 (LSDRKHGRDNKS) the composition is skewed to basic and acidic residues. Residues 137–178 (LSDRKHGRDNKSGADNGSKSRHSGKRANDVQTKTSRPAVVDD) form a disordered region. The PHD-type zinc finger occupies 187–239 (ETLCGTCGGRYNANEFWIGCDICERWFHGKCVRITPAKAEHIKHYKCPDCSSS).

This sequence belongs to the Alfin family. As to quaternary structure, interacts with H3K4me3 and to a lesser extent with H3K4me2.

It is found in the nucleus. Histone-binding component that specifically recognizes H3 tails trimethylated on 'Lys-4' (H3K4me3), which mark transcription start sites of virtually all active genes. This Oryza sativa subsp. indica (Rice) protein is PHD finger protein ALFIN-LIKE 2.